The sequence spans 441 residues: Probable tRNA pseudouridine synthase D (441 aa).

Aspartate 89 (nucleophile) is an active-site residue. The TRUD domain occupies 168–393; that stretch reads GVPNFFGVQR…SKGTRREVLL (226 aa).

The protein belongs to the pseudouridine synthase TruD family.

It carries out the reaction uridine(13) in tRNA = pseudouridine(13) in tRNA. Its function is as follows. Could be responsible for synthesis of pseudouridine from uracil-13 in transfer RNAs. In Methanosarcina acetivorans (strain ATCC 35395 / DSM 2834 / JCM 12185 / C2A), this protein is Probable tRNA pseudouridine synthase D.